Consider the following 242-residue polypeptide: tRNA pseudouridine synthase A (242 aa).

Residue D51 is the Nucleophile of the active site. Y107 contributes to the substrate binding site.

The protein belongs to the tRNA pseudouridine synthase TruA family. As to quaternary structure, homodimer.

It catalyses the reaction uridine(38/39/40) in tRNA = pseudouridine(38/39/40) in tRNA. Its function is as follows. Formation of pseudouridine at positions 38, 39 and 40 in the anticodon stem and loop of transfer RNAs. The protein is tRNA pseudouridine synthase A of Helicobacter acinonychis (strain Sheeba).